The sequence spans 347 residues: Circulating cathodic antigen (347 aa).

Residues Ile-76 to Ile-109 are a coiled coil. The disordered stretch occupies residues Pro-149 to Asp-177. Polar residues predominate over residues Ser-153–Gly-174. Positions Asp-206 to Ser-233 form a coiled coil. The segment at Leu-303–Asp-332 is disordered. Positions Pro-307–Ser-316 are enriched in low complexity.

This sequence belongs to the SIKE family. Post-translationally, O-glycosylated.

Functionally, involved in protection of the schistosome gut. This is Circulating cathodic antigen from Schistosoma mansoni (Blood fluke).